The sequence spans 178 residues: Cytidylate kinase (178 aa).

7 to 15 (GLPGTGTTT) provides a ligand contact to ATP.

Belongs to the cytidylate kinase family. Type 2 subfamily.

It localises to the cytoplasm. It carries out the reaction CMP + ATP = CDP + ADP. The catalysed reaction is dCMP + ATP = dCDP + ADP. In Methanococcus aeolicus (strain ATCC BAA-1280 / DSM 17508 / OCM 812 / Nankai-3), this protein is Cytidylate kinase.